We begin with the raw amino-acid sequence, 805 residues long: Centrosomal protein of 85 kDa-like (805 aa).

Disordered regions lie at residues 1-27 (MWGR…AGPD) and 50-89 (RNNH…LSFK). S15 is modified (phosphoserine). Positions 60-74 (ASDSGDTGIGTSCSD) are enriched in polar residues. Phosphoserine is present on S207. The stretch at 439–682 (SQQGEFEQKL…LENQRQTDET (244 aa)) forms a coiled coil.

The protein belongs to the CEP85 family. Isoform 1 and isoform 4 are expressed in spleen, lymph, thymus, tonsil and peripheral blood leukocytes, with isoform 1 expressed at higher levels. Isoform 4 is detected in K-562 leukemia cells and in the blood of precursor T lymphoblastic lymphoma (T-ALL) patients.

It is found in the cytoplasm. It localises to the cytoskeleton. The protein localises to the microtubule organizing center. The protein resides in the centrosome. Plays an essential role in neuronal cell migration. This Homo sapiens (Human) protein is Centrosomal protein of 85 kDa-like.